Here is a 173-residue protein sequence, read N- to C-terminus: Photosystem I assembly protein Ycf3 (173 aa).

TPR repeat units follow at residues 35 to 68 (AFAYYRDGMSAQADGEYAEALENYYEALNLEDDP), 72 to 105 (SYILYNIGLIHASNGEHDQALEYYHQALENNPRM), and 120 to 153 (GEKAKETGNSRDANSYFDQAAEYWKQAISLAPNN).

Belongs to the Ycf3 family.

It is found in the cellular thylakoid membrane. Functionally, essential for the assembly of the photosystem I (PSI) complex. May act as a chaperone-like factor to guide the assembly of the PSI subunits. This chain is Photosystem I assembly protein Ycf3, found in Trichodesmium erythraeum (strain IMS101).